Reading from the N-terminus, the 392-residue chain is Cell division protein FtsZ (392 aa).

GTP-binding positions include 24–28, 111–113, E142, R145, and D189; these read GGGCN and GTG.

The protein belongs to the FtsZ family. As to quaternary structure, homodimer. Polymerizes to form a dynamic ring structure in a strictly GTP-dependent manner. Interacts directly with several other division proteins.

It localises to the cytoplasm. In terms of biological role, essential cell division protein that forms a contractile ring structure (Z ring) at the future cell division site. The regulation of the ring assembly controls the timing and the location of cell division. One of the functions of the FtsZ ring is to recruit other cell division proteins to the septum to produce a new cell wall between the dividing cells. Binds GTP and shows GTPase activity. In Neisseria gonorrhoeae, this protein is Cell division protein FtsZ.